The sequence spans 833 residues: AdoMet-dependent rRNA methyltransferase SPB1 (833 aa).

Residues Gly59, Trp61, Asp79, Asp95, and Asp120 each contribute to the S-adenosyl-L-methionine site. Catalysis depends on Lys160, which acts as the Proton acceptor. Coiled-coil stretches lie at residues 348-389 and 453-481; these read EEEQ…QLNM and RDELAEADELESQLDAMYSNYKERKSERD. Residues 477–493 are compositionally biased toward basic and acidic residues; sequence KSERDAKFRAKQARESS. Disordered regions lie at residues 477–532, 592–645, and 776–810; these read KSER…SDDD, KRKL…EKHS, and VTKKAKQKPKVTVVVASGKNRGLSGRPKGVKGKYK. 2 stretches are compositionally biased toward acidic residues: residues 505-532 and 622-634; these read QSDEENEEETKDYVDDDDNSDLSDSDDD and EDGDVDSEYDSEE. Residues 635 to 645 are compositionally biased toward basic and acidic residues; it reads EAKRTKQEKHS. Positions 730 to 782 form a coiled coil; sequence AEAKARKKHRAVARLEKLKKKAGLINDDSDKSEKDKAEEIAKLMRKVTKKAKQ.

It belongs to the class I-like SAM-binding methyltransferase superfamily. RNA methyltransferase RlmE family. SPB1 subfamily. In terms of assembly, component of the nucleolar and nucleoplasmic pre-60S ribosomal particle.

It localises to the nucleus. It is found in the nucleolus. It carries out the reaction a ribonucleotide in rRNA + S-adenosyl-L-methionine = a 2'-O-methylribonucleotide in rRNA + S-adenosyl-L-homocysteine + H(+). Required for proper assembly of pre-ribosomal particles during the biogenesis of the 60S ribosomal subunit. The sequence is that of AdoMet-dependent rRNA methyltransferase SPB1 from Kluyveromyces lactis (strain ATCC 8585 / CBS 2359 / DSM 70799 / NBRC 1267 / NRRL Y-1140 / WM37) (Yeast).